The following is a 250-amino-acid chain: Probable transcriptional regulatory protein Plut_1643 (250 aa).

It belongs to the TACO1 family.

The protein localises to the cytoplasm. The chain is Probable transcriptional regulatory protein Plut_1643 from Chlorobium luteolum (strain DSM 273 / BCRC 81028 / 2530) (Pelodictyon luteolum).